We begin with the raw amino-acid sequence, 365 residues long: Galactoside alpha-(1,2)-fucosyltransferase 1 (365 aa).

The Cytoplasmic segment spans residues 1–8; that stretch reads MWLRSHRQ. The helical; Signal-anchor for type II membrane protein transmembrane segment at 9–25 threads the bilayer; that stretch reads LCLAFLLVCVLSVIFFL. At 26–365 the chain is on the lumenal side; the sequence is HIHQDSFPHG…LSPLWTLAKP (340 aa). 2 N-linked (GlcNAc...) asparagine glycosylation sites follow: Asn-65 and Asn-327.

It belongs to the glycosyltransferase 11 family.

The protein resides in the golgi apparatus. The protein localises to the golgi stack membrane. The catalysed reaction is a beta-D-galactosyl-(1-&gt;4)-N-acetyl-beta-D-glucosaminyl derivative + GDP-beta-L-fucose = an alpha-L-Fuc-(1-&gt;2)-beta-D-Gal-(1-&gt;4)-beta-D-GlcNAc derivative + GDP + H(+). It catalyses the reaction a ganglioside GA1 + GDP-beta-L-fucose = a ganglioside Fuc-GA1 + GDP + H(+). The enzyme catalyses a beta-D-Gal-(1-&gt;3)-beta-D-GlcNAc-(1-&gt;3)-beta-D-Gal-(1-&gt;4)-beta-D-Glc-(1&lt;-&gt;1')-Cer(d18:1(4E)) + GDP-beta-L-fucose = alpha-L-fucosyl-(1-&gt;2)- beta-D-galactosyl-(1-&gt;3)-N-acetyl-beta-D-glucosaminyl-(1-&gt;3)-beta-D-galactosyl-(1-&gt;4)-beta-D-glucosyl-(1&lt;-&gt;1')-N-acylsphing-4-enine + GDP + H(+). It carries out the reaction a neolactoside nLc4Cer(d18:1(4E)) + GDP-beta-L-fucose = a neolactoside IV(2)-alpha-Fuc-nLc4Cer(d18:1(4E)) + GDP + H(+). The catalysed reaction is a ganglioside GM1 + GDP-beta-L-fucose = a ganglioside Fuc-GM1 + GDP + H(+). It catalyses the reaction beta-D-galactosyl-(1-&gt;3)-N-acetyl-D-galactosamine + GDP-beta-L-fucose = alpha-L-fucosyl-(1-&gt;2)-beta-D-galactosyl-(1-&gt;3)-N-acetyl-D-galactosamine + GDP + H(+). It functions in the pathway protein modification; protein glycosylation. In terms of biological role, catalyzes the transfer of L-fucose, from a guanosine diphosphate-beta-L-fucose, to the terminal galactose residue of glycoconjugates through an alpha(1,2) linkage leading to H antigen synthesis that is an intermediate substrate in the synthesis of ABO blood group antigens. H antigen is essential for maturation of the glomerular layer of the main olfactory bulb, in cell migration and early cell-cell contacts during tumor associated angiogenesis. Preferentially fucosylates soluble lactose and to a lesser extent fucosylates glycolipids gangliosides GA1 and GM1a. The protein is Galactoside alpha-(1,2)-fucosyltransferase 1 of Homo sapiens (Human).